The chain runs to 389 residues: Choline/ethanolaminephosphotransferase 2 (389 aa).

8 consecutive transmembrane segments (helical) span residues 49–69 (MITLMGFMFLLTSALLGYIYS), 141–161 (TFWFWVISAVPFFGATWEHYF), 176–196 (GLALIYCGHFFTAIVGAEWWA), 220–240 (IILFSMIFFAVIPTLAINTSN), 252–272 (MLLALAMLYPLVTLIAGVLIW), 286–306 (HLVVLGTGLAFGFLVGRMILA), 321–338 (MSLLYLPFALANALTARL), and 350–370 (VLLGYCIFTLSLYAHFATSVI).

This sequence belongs to the CDP-alcohol phosphatidyltransferase class-I family. Mg(2+) is required as a cofactor. It depends on Mn(2+) as a cofactor.

The protein resides in the membrane. The enzyme catalyses CDP-ethanolamine + a 1,2-diacyl-sn-glycerol = a 1,2-diacyl-sn-glycero-3-phosphoethanolamine + CMP + H(+). The catalysed reaction is CDP-choline + a 1,2-diacyl-sn-glycerol = a 1,2-diacyl-sn-glycero-3-phosphocholine + CMP + H(+). The protein operates within phospholipid metabolism; phosphatidylethanolamine biosynthesis; phosphatidylethanolamine from ethanolamine: step 3/3. It participates in phospholipid metabolism; phosphatidylcholine biosynthesis; phosphatidylcholine from phosphocholine: step 2/2. In terms of biological role, catalyzes both phosphatidylcholine and phosphatidylethanolamine biosynthesis from CDP-choline and CDP-ethanolamine, respectively. Has a higher cholinephosphotransferase activity than ethanolaminephosphotransferase activity. The sequence is that of Choline/ethanolaminephosphotransferase 2 (AAPT2) from Arabidopsis thaliana (Mouse-ear cress).